Consider the following 264-residue polypeptide: Indole-3-glycerol phosphate synthase (264 aa).

This sequence belongs to the TrpC family.

It catalyses the reaction 1-(2-carboxyphenylamino)-1-deoxy-D-ribulose 5-phosphate + H(+) = (1S,2R)-1-C-(indol-3-yl)glycerol 3-phosphate + CO2 + H2O. It participates in amino-acid biosynthesis; L-tryptophan biosynthesis; L-tryptophan from chorismate: step 4/5. The polypeptide is Indole-3-glycerol phosphate synthase (Xylella fastidiosa (strain M12)).